The primary structure comprises 129 residues: Cytochrome c' (129 aa).

Positions 12, 13, 69, 70, 119, 122, and 123 each coordinate heme c.

In terms of processing, binds 1 heme c group covalently per subunit.

In terms of biological role, cytochrome c' is the most widely occurring bacterial c-type cytochrome. Cytochromes c' are high-spin proteins and the heme has no sixth ligand. Their exact function is not known. The sequence is that of Cytochrome c' from Rubrivivax gelatinosus (Rhodocyclus gelatinosus).